The following is a 375-amino-acid chain: 23S rRNA (uracil(747)-C(5))-methyltransferase RlmC (375 aa).

The [4Fe-4S] cluster site is built by Cys-3, Cys-11, Cys-14, and Cys-87. 4 residues coordinate S-adenosyl-L-methionine: Gln-212, Phe-241, Glu-262, and Asn-307. Cys-334 acts as the Nucleophile in catalysis.

This sequence belongs to the class I-like SAM-binding methyltransferase superfamily. RNA M5U methyltransferase family. RlmC subfamily.

The catalysed reaction is uridine(747) in 23S rRNA + S-adenosyl-L-methionine = 5-methyluridine(747) in 23S rRNA + S-adenosyl-L-homocysteine + H(+). Catalyzes the formation of 5-methyl-uridine at position 747 (m5U747) in 23S rRNA. The sequence is that of 23S rRNA (uracil(747)-C(5))-methyltransferase RlmC from Escherichia fergusonii (strain ATCC 35469 / DSM 13698 / CCUG 18766 / IAM 14443 / JCM 21226 / LMG 7866 / NBRC 102419 / NCTC 12128 / CDC 0568-73).